Here is a 243-residue protein sequence, read N- to C-terminus: Ubiquinone/menaquinone biosynthesis C-methyltransferase UbiE (243 aa).

Residues Thr-69, Asp-90, and 116 to 117 (DA) each bind S-adenosyl-L-methionine.

It belongs to the class I-like SAM-binding methyltransferase superfamily. MenG/UbiE family.

It catalyses the reaction a 2-demethylmenaquinol + S-adenosyl-L-methionine = a menaquinol + S-adenosyl-L-homocysteine + H(+). The enzyme catalyses a 2-methoxy-6-(all-trans-polyprenyl)benzene-1,4-diol + S-adenosyl-L-methionine = a 5-methoxy-2-methyl-3-(all-trans-polyprenyl)benzene-1,4-diol + S-adenosyl-L-homocysteine + H(+). It functions in the pathway quinol/quinone metabolism; menaquinone biosynthesis; menaquinol from 1,4-dihydroxy-2-naphthoate: step 2/2. The protein operates within cofactor biosynthesis; ubiquinone biosynthesis. In terms of biological role, methyltransferase required for the conversion of demethylmenaquinol (DMKH2) to menaquinol (MKH2) and the conversion of 2-polyprenyl-6-methoxy-1,4-benzoquinol (DDMQH2) to 2-polyprenyl-3-methyl-6-methoxy-1,4-benzoquinol (DMQH2). The chain is Ubiquinone/menaquinone biosynthesis C-methyltransferase UbiE from Burkholderia cenocepacia (strain ATCC BAA-245 / DSM 16553 / LMG 16656 / NCTC 13227 / J2315 / CF5610) (Burkholderia cepacia (strain J2315)).